The following is a 259-amino-acid chain: MTDLKASSLRALKLMDLTTLNDDDTNEKVIALCHQAKTPVGNTAAVCIYPRFIPIARKTLNEQGTPDIRIATVTNFPHGNDDIDIALAETRAAIAYGADEVDVVFPYRALIAGNEQVGFELVKACKEACAAANVLLKVIIETGELKEEALIRKASEISIKAGADFIKTSTGKVPVNATPESARIMMEVIRDMGVEKTVGFKPAGGVRSAEDAQQFLAIADELFGADWADSRHYRFGASSLLASLLKALGHGDGKSASSY.

Aspartate 102 acts as the Proton donor/acceptor in catalysis. The Schiff-base intermediate with acetaldehyde role is filled by lysine 167. The Proton donor/acceptor role is filled by lysine 201.

It belongs to the DeoC/FbaB aldolase family. DeoC type 2 subfamily.

The protein resides in the cytoplasm. It catalyses the reaction 2-deoxy-D-ribose 5-phosphate = D-glyceraldehyde 3-phosphate + acetaldehyde. The protein operates within carbohydrate degradation; 2-deoxy-D-ribose 1-phosphate degradation; D-glyceraldehyde 3-phosphate and acetaldehyde from 2-deoxy-alpha-D-ribose 1-phosphate: step 2/2. Functionally, catalyzes a reversible aldol reaction between acetaldehyde and D-glyceraldehyde 3-phosphate to generate 2-deoxy-D-ribose 5-phosphate. In Klebsiella pneumoniae (strain 342), this protein is Deoxyribose-phosphate aldolase.